The following is a 114-amino-acid chain: Non-specific lipid-transfer protein 2 (114 aa).

Positions 1–23 are cleaved as a signal peptide; that stretch reads MEMFGKIACFVVFCMVVVAPHAE. 4 disulfide bridges follow: Cys-27–Cys-73, Cys-37–Cys-50, Cys-51–Cys-96, and Cys-71–Cys-110.

It belongs to the plant LTP family.

In terms of biological role, plant non-specific lipid-transfer proteins transfer phospholipids as well as galactolipids across membranes. May play a role in wax or cutin deposition in the cell walls of expanding epidermal cells and certain secretory tissues. The chain is Non-specific lipid-transfer protein 2 (LE16) from Solanum lycopersicum (Tomato).